The sequence spans 229 residues: Peptidase E (229 aa).

Active-site charge relay system residues include Ser120, Asp135, and His157.

Belongs to the peptidase S51 family.

It is found in the cytoplasm. The catalysed reaction is Dipeptidase E catalyzes the hydrolysis of dipeptides Asp-|-Xaa. It does not act on peptides with N-terminal Glu, Asn or Gln, nor does it cleave isoaspartyl peptides.. Hydrolyzes dipeptides containing N-terminal aspartate residues. May play a role in allowing the cell to use peptide aspartate to spare carbon otherwise required for the synthesis of the aspartate family of amino acids. This chain is Peptidase E, found in Escherichia coli O6:K15:H31 (strain 536 / UPEC).